The sequence spans 145 residues: Lysozyme-like protein 4 (145 aa).

The N-terminal stretch at methionine 1–alanine 19 is a signal peptide. The C-type lysozyme domain maps to serine 20–leucine 145. Cystine bridges form between cysteine 25–cysteine 143, cysteine 49–cysteine 130, cysteine 84–cysteine 95, and cysteine 91–cysteine 109. Residue glutamate 54 is part of the active site.

This sequence belongs to the glycosyl hydrolase 22 family. Monomer. Expressed in the brain, lung, ovary, uterus and testis. In testis expressed in the germinal epithelium and on the maturing spermatozoa (at protein level).

The protein resides in the secreted. Its subcellular location is the cytoplasmic vesicle. The protein localises to the secretory vesicle. It is found in the acrosome. It localises to the cell projection. The protein resides in the cilium. Its subcellular location is the flagellum. In terms of biological role, may be involved in fertilization. Has no detectable bacteriolytic and lysozyme activities in vitro. The protein is Lysozyme-like protein 4 (Lyzl4) of Rattus norvegicus (Rat).